A 1018-amino-acid chain; its full sequence is Calcium-transporting ATPase sarcoplasmic/endoplasmic reticulum type (1018 aa).

Residues 1–48 are Cytoplasmic-facing; that stretch reads MEDGHSKTVDEVLSHFRVDPERGLSLDQVKEYQKKYGPNELPAEEGKT. The chain crosses the membrane as a helical span at residues 49-69; the sequence is LWQLVLEQFDDLLVKILLLAA. The Lumenal portion of the chain corresponds to 70-88; it reads IISFVLALFEEHEGVEAFV. Residues 89–109 form a helical membrane-spanning segment; sequence EPFVILLILIANAVVGVWQER. Topologically, residues 110-252 are cytoplasmic; sequence NAESAIEALK…EIKTPLQQKL (143 aa). The helical transmembrane segment at 253–272 threads the bilayer; that stretch reads DEFGEQLSKVISLICVAVWA. The Lumenal portion of the chain corresponds to 273–294; it reads INIGHFNDPAHGGSWIKGAVYY. Residues 295–312 traverse the membrane as a helical segment; that stretch reads FKIAVALAVAAIPEGLPA. Positions 303, 304, 306, and 308 each coordinate Ca(2+). At 313-756 the chain is on the cytoplasmic side; that stretch reads VITTCLALGT…EEGRAIYNNM (444 aa). Catalysis depends on Asp-350, which acts as the 4-aspartylphosphate intermediate. Positions 702 and 706 each coordinate Mg(2+). The chain crosses the membrane as a helical span at residues 757-776; the sequence is KQFIRYLISSNIGEVVSIFL. Ca(2+) is bound by residues Asn-767 and Glu-770. The Lumenal portion of the chain corresponds to 777–786; sequence TAALGLPEAL. Residues 787 to 807 traverse the membrane as a helical segment; it reads IPVQLLWVNLVTDGLPATALG. Ca(2+) contacts are provided by Asn-795, Thr-798, and Asp-799. Over 808 to 827 the chain is Cytoplasmic; the sequence is FNPPDLDIMTKPPRKADEGL. Residues 828–850 traverse the membrane as a helical segment; it reads ISGWLFFRYMAIGGYVGCATVGG. Residues 851-896 lie on the Lumenal side of the membrane; sequence AAWWFMFSETGPQLSYWQLTHHLSCLGGGEEFKGIDCKIFNDPHPM. A helical transmembrane segment spans residues 897-916; it reads TMALSVLVTIEMLNAMNSLS. Ca(2+) is bound at residue Glu-907. Over 917–929 the chain is Cytoplasmic; that stretch reads ENQSLVQMPPWCN. Residues 930-948 form a helical membrane-spanning segment; sequence IWLIASMCLSFALHFVILY. Topologically, residues 949–963 are lumenal; the sequence is VDVLSTVFQVTPLDG. The helical transmembrane segment at 964–984 threads the bilayer; it reads NEWMTVMKFSLPVVLLDEILK. Residues 985-1018 are Cytoplasmic-facing; the sequence is FVARRISDGESYIKNMHGLVLAWAVFFAYIIWGP.

Belongs to the cation transport ATPase (P-type) (TC 3.A.3) family.

It is found in the endoplasmic reticulum membrane. The protein resides in the sarcoplasmic reticulum membrane. It catalyses the reaction Ca(2+)(in) + ATP + H2O = Ca(2+)(out) + ADP + phosphate + H(+). This magnesium-dependent enzyme catalyzes the hydrolysis of ATP coupled with the transport of calcium. The protein is Calcium-transporting ATPase sarcoplasmic/endoplasmic reticulum type of Anopheles gambiae (African malaria mosquito).